The primary structure comprises 347 residues: MDDQPRLMHSHPGVGMAGHPSLSQHMQDGTGANEGEGGRKQDIGDILQQIMTITDQSLDEAQARKHALNCHRMKPALFNVLCEIKEKTVLSIRGAQEEEPADPQLMRLDNMLLAEGVAGPEKGGGSAAAAAAAAASGGAGADNSAEHSDYRAKLSQIRQIYHTELEKYEQACNEFTTHVMNLLREQSRTRPISPKEIERMVSIIHRKFSSIQMQLKQSTCEAVMILRSRFLDARRKRRNFNKQATEILNEYFYSHLSNPYPSEEAKEELAKKCAITVSQVSNWFGNKRIRYKKNIGKFQEEANIYAAKTAVNATNVSVHGSQANSPSTPSSAGGYPSPCYQSDRRIQ.

Residues 1–40 (MDDQPRLMHSHPGVGMAGHPSLSQHMQDGTGANEGEGGRK) form a disordered region. The PBC domain occupies 38–232 (GRKQDIGDIL…VMILRSRFLD (195 aa)). Positions 45 to 124 (DILQQIMTIT…EGVAGPEKGG (80 aa)) are PBC-A. The segment at 127 to 232 (AAAAAAAAAS…VMILRSRFLD (106 aa)) is PBC-B. The homeobox; TALE-type DNA-binding region spans 233 to 295 (ARRKRRNFNK…NKRIRYKKNI (63 aa)). A compositionally biased stretch (polar residues) spans 318-331 (VHGSQANSPSTPSS). Positions 318–347 (VHGSQANSPSTPSSAGGYPSPCYQSDRRIQ) are disordered.

The protein belongs to the TALE/PBX homeobox family. In terms of assembly, forms a heterodimer with meis1; the interaction is necessary for neural fate induction.

The protein localises to the nucleus. Functionally, acts as a transcriptional activator in complex with isoform 2 of meis1, to induce posterior neural and neural crest gene expression, and thereby specify hindbrain and neural crest cell fate. Binds to a highly conserved region in the promoter of the neural crest gene zic3. Required for the nuclear transport or retention of meis1. The chain is Pre-B-cell leukemia transcription factor 1 from Xenopus tropicalis (Western clawed frog).